A 424-amino-acid polypeptide reads, in one-letter code: CinA-like protein (424 aa).

It belongs to the CinA family.

This Shewanella denitrificans (strain OS217 / ATCC BAA-1090 / DSM 15013) protein is CinA-like protein.